The following is a 413-amino-acid chain: Probable elongation factor 1-gamma 2 (413 aa).

The 82-residue stretch at 1 to 82 (MALVMHTYKG…YVSRKNGDNS (82 aa)) folds into the GST N-terminal domain. In terms of domain architecture, GST C-terminal spans 87–215 (SLIEYAHIEQ…AKQTEAVPPV (129 aa)). Positions 207-260 (KQTEAVPPVPTKKAPQPAKPKEEPKKAAPVAEAPKPAEEEEAPKPKAKNPLDLL) are disordered. The 161-residue stretch at 253 to 413 (AKNPLDLLPP…EALLDAKCFK (161 aa)) folds into the EF-1-gamma C-terminal domain.

In terms of assembly, EF-1 is composed of four subunits: alpha, beta, delta, and gamma.

Functionally, probably plays a role in anchoring the complex to other cellular components. The sequence is that of Probable elongation factor 1-gamma 2 from Arabidopsis thaliana (Mouse-ear cress).